Consider the following 310-residue polypeptide: tRNA-cytidine(32) 2-sulfurtransferase (310 aa).

The short motif at 45–50 (SGGKDS) is the PP-loop motif element. 3 residues coordinate [4Fe-4S] cluster: C120, C123, and C211.

The protein belongs to the TtcA family. As to quaternary structure, homodimer. It depends on Mg(2+) as a cofactor. [4Fe-4S] cluster serves as cofactor.

Its subcellular location is the cytoplasm. The enzyme catalyses cytidine(32) in tRNA + S-sulfanyl-L-cysteinyl-[cysteine desulfurase] + AH2 + ATP = 2-thiocytidine(32) in tRNA + L-cysteinyl-[cysteine desulfurase] + A + AMP + diphosphate + H(+). It participates in tRNA modification. Functionally, catalyzes the ATP-dependent 2-thiolation of cytidine in position 32 of tRNA, to form 2-thiocytidine (s(2)C32). The sulfur atoms are provided by the cysteine/cysteine desulfurase (IscS) system. The sequence is that of tRNA-cytidine(32) 2-sulfurtransferase from Shewanella baltica (strain OS185).